Here is a 230-residue protein sequence, read N- to C-terminus: Ribonuclease HII (230 aa).

In terms of domain architecture, RNase H type-2 spans 1 to 224 (MIIIGIDEAG…CKRILDKSKQ (224 aa)). Residues Asp-7, Glu-8, and Asp-112 each coordinate a divalent metal cation.

This sequence belongs to the RNase HII family. The cofactor is Mn(2+). It depends on Mg(2+) as a cofactor.

The protein localises to the cytoplasm. The catalysed reaction is Endonucleolytic cleavage to 5'-phosphomonoester.. Its function is as follows. Endonuclease that specifically degrades the RNA of RNA-DNA hybrids. This chain is Ribonuclease HII (rnhB), found in Methanocaldococcus jannaschii (strain ATCC 43067 / DSM 2661 / JAL-1 / JCM 10045 / NBRC 100440) (Methanococcus jannaschii).